The primary structure comprises 251 residues: Diphthine synthase (251 aa).

Residues Asp83, Leu86, 111–112 (SI), Leu163, and Leu205 each bind S-adenosyl-L-methionine.

Belongs to the diphthine synthase family. As to quaternary structure, homodimer.

The enzyme catalyses 2-[(3S)-amino-3-carboxypropyl]-L-histidyl-[translation elongation factor 2] + 3 S-adenosyl-L-methionine = diphthine-[translation elongation factor 2] + 3 S-adenosyl-L-homocysteine + 3 H(+). Its pathway is protein modification; peptidyl-diphthamide biosynthesis. Functionally, S-adenosyl-L-methionine-dependent methyltransferase that catalyzes the trimethylation of the amino group of the modified target histidine residue in translation elongation factor 2 (EF-2), to form an intermediate called diphthine. The three successive methylation reactions represent the second step of diphthamide biosynthesis. The protein is Diphthine synthase of Pyrobaculum calidifontis (strain DSM 21063 / JCM 11548 / VA1).